The primary structure comprises 293 residues: 4-diphosphocytidyl-2-C-methyl-D-erythritol kinase (293 aa).

K16 is a catalytic residue. Residue 99–109 (PMGAGLGGGSS) participates in ATP binding. D141 is a catalytic residue.

Belongs to the GHMP kinase family. IspE subfamily.

It catalyses the reaction 4-CDP-2-C-methyl-D-erythritol + ATP = 4-CDP-2-C-methyl-D-erythritol 2-phosphate + ADP + H(+). Its pathway is isoprenoid biosynthesis; isopentenyl diphosphate biosynthesis via DXP pathway; isopentenyl diphosphate from 1-deoxy-D-xylulose 5-phosphate: step 3/6. Catalyzes the phosphorylation of the position 2 hydroxy group of 4-diphosphocytidyl-2C-methyl-D-erythritol. In Burkholderia thailandensis (strain ATCC 700388 / DSM 13276 / CCUG 48851 / CIP 106301 / E264), this protein is 4-diphosphocytidyl-2-C-methyl-D-erythritol kinase.